The chain runs to 403 residues: Argininosuccinate synthase (403 aa).

Residues A13–S21 and A40 each bind ATP. Residues Y91 and S96 each contribute to the L-citrulline site. Residue G121 participates in ATP binding. L-aspartate is bound by residues T123, N127, and D128. N127 is a binding site for L-citrulline. The L-citrulline site is built by R131, S180, S189, E265, and Y277.

The protein belongs to the argininosuccinate synthase family. Type 1 subfamily. Homotetramer.

The protein localises to the cytoplasm. The catalysed reaction is L-citrulline + L-aspartate + ATP = 2-(N(omega)-L-arginino)succinate + AMP + diphosphate + H(+). It participates in amino-acid biosynthesis; L-arginine biosynthesis; L-arginine from L-ornithine and carbamoyl phosphate: step 2/3. The protein is Argininosuccinate synthase of Leptospira borgpetersenii serovar Hardjo-bovis (strain JB197).